The chain runs to 370 residues: Elongation factor Ts, mitochondrial (370 aa).

The N-terminal 29 residues, 1–29, are a transit peptide targeting the mitochondrion; sequence MALLSAAPRALRLPRRLPLGAALPALRAL.

It belongs to the EF-Ts family.

It localises to the mitochondrion. Functionally, associates with the EF-Tu.GDP complex and induces the exchange of GDP to GTP. It remains bound to the aminoacyl-tRNA.EF-Tu.GTP complex up to the GTP hydrolysis stage on the ribosome. The chain is Elongation factor Ts, mitochondrial from Cryptococcus neoformans var. neoformans serotype D (strain B-3501A) (Filobasidiella neoformans).